We begin with the raw amino-acid sequence, 225 residues long: Ribulose-phosphate 3-epimerase (225 aa).

Substrate is bound at residue serine 10. A divalent metal cation is bound by residues histidine 35, aspartate 37, and histidine 68. Aspartate 37 functions as the Proton acceptor in the catalytic mechanism. Substrate is bound by residues histidine 68, 144–147 (GFGG), and 175–177 (DGG). Aspartate 175 contacts a divalent metal cation. The Proton donor role is filled by aspartate 175.

Belongs to the ribulose-phosphate 3-epimerase family. Requires a divalent metal cation as cofactor.

The catalysed reaction is D-ribulose 5-phosphate = D-xylulose 5-phosphate. It functions in the pathway carbohydrate degradation. Functionally, catalyzes the reversible epimerization of D-ribulose 5-phosphate to D-xylulose 5-phosphate. The chain is Ribulose-phosphate 3-epimerase from Rhodospirillum rubrum.